Reading from the N-terminus, the 324-residue chain is Geranylgeranyl pyrophosphate synthase dpmpD (324 aa).

3 residues coordinate isopentenyl diphosphate: lysine 50, arginine 53, and histidine 82. 2 residues coordinate Mg(2+): aspartate 89 and aspartate 93. Arginine 98 contacts dimethylallyl diphosphate. Arginine 99 is an isopentenyl diphosphate binding site. Residues lysine 176, threonine 177, and glutamine 210 each contribute to the dimethylallyl diphosphate site. Residue aspartate 213 coordinates Mg(2+). The dimethylallyl diphosphate site is built by asparagine 217, lysine 227, and lysine 237.

It belongs to the FPP/GGPP synthase family. Requires Mg(2+) as cofactor.

It carries out the reaction isopentenyl diphosphate + dimethylallyl diphosphate = (2E)-geranyl diphosphate + diphosphate. The catalysed reaction is isopentenyl diphosphate + (2E)-geranyl diphosphate = (2E,6E)-farnesyl diphosphate + diphosphate. It catalyses the reaction isopentenyl diphosphate + (2E,6E)-farnesyl diphosphate = (2E,6E,10E)-geranylgeranyl diphosphate + diphosphate. It functions in the pathway secondary metabolite biosynthesis; terpenoid biosynthesis. In terms of biological role, geranylgeranyl pyrophosphate synthase; part of the gene cluster that mediates the biosynthesis of diterpenoid pyrones. The first step of the pathway is the synthesis of the alpha-pyrone moiety by the polyketide synthase dpmpA via condensation of one acetyl-CoA starter unit with 3 malonyl-CoA units and 2 methylations. The alpha-pyrone is then combined with geranylgeranyl pyrophosphate (GGPP) formed by the GGPP synthase dpmpD through the action of the prenyltransferase dpmpC to yield a linear alpha-pyrone diterpenoid. Subsequent steps in the diterpenoid pyrone biosynthetic pathway involve the decalin core formation, which is initiated by the epoxidation of the C10-C11 olefin by the FAD-dependent oxidoreductase dpmpE, and is followed by a cyclization cascade catalyzed by the terpene cyclase dpmpB. The short chain dehydrogenase/reductase dpmpG then oxidizes the 8S hydroxy group to a ketone and the short chain dehydrogenase/reductase dpmpH reduces the ketone to the 8R hydroxy group to yield higginsianin B. Higginsianin B is further methylated by the methyltransferase dpmpI to produce the intermediate named FDDP B. The cytochrome P450 monooxygenase dpmpJ then oxidizes the C-26 methyl to primary alcohol, producing the final diterpenoid pyrone with a C-26 primary alcohol on the gamma-pyrone moiety named FDDP C. This chain is Geranylgeranyl pyrophosphate synthase dpmpD, found in Macrophomina phaseolina (strain MS6) (Charcoal rot fungus).